We begin with the raw amino-acid sequence, 118 residues long: NADH dehydrogenase [ubiquinone] iron-sulfur protein 5-A (118 aa).

The CHCH domain occupies 46 to 87; that stretch reads KGRCYDFWMDFSECMSHCREPKDCTLLREDYLECLHHSKEFQ. 2 consecutive short sequence motifs (cx9C motif) follow at residues 49 to 59 and 69 to 79; these read CYDFWMDFSEC and CTLLREDYLEC. 2 disulfides stabilise this stretch: Cys49–Cys79 and Cys59–Cys69. The disordered stretch occupies residues 98 to 118; that stretch reads RKLRAASRKGEEAGDGTHNHH.

This sequence belongs to the complex I NDUFS5 subunit family. As to quaternary structure, complex I is composed of at least 49 different subunits. This is a component of the iron-sulfur (IP) fragment of the enzyme.

The protein localises to the mitochondrion. It is found in the mitochondrion inner membrane. The protein resides in the mitochondrion intermembrane space. Its function is as follows. Accessory subunit of the mitochondrial membrane respiratory chain NADH dehydrogenase (Complex I), that is believed not to be involved in catalysis. Complex I functions in the transfer of electrons from NADH to the respiratory chain. The immediate electron acceptor for the enzyme is believed to be ubiquinone. This chain is NADH dehydrogenase [ubiquinone] iron-sulfur protein 5-A, found in Arabidopsis thaliana (Mouse-ear cress).